Here is a 303-residue protein sequence, read N- to C-terminus: Coenzyme PQQ synthesis protein B (303 aa).

It belongs to the PqqB family.

The protein operates within cofactor biosynthesis; pyrroloquinoline quinone biosynthesis. May be involved in the transport of PQQ or its precursor to the periplasm. This Pseudomonas entomophila (strain L48) protein is Coenzyme PQQ synthesis protein B.